The chain runs to 101 residues: UPF0751 protein DSY3086 (101 aa).

Belongs to the UPF0751 family.

The chain is UPF0751 protein DSY3086 from Desulfitobacterium hafniense (strain Y51).